Here is a 1131-residue protein sequence, read N- to C-terminus: DNA polymerase II large subunit (1131 aa).

The protein belongs to the archaeal DNA polymerase II family. Heterodimer of a large subunit and a small subunit.

The enzyme catalyses DNA(n) + a 2'-deoxyribonucleoside 5'-triphosphate = DNA(n+1) + diphosphate. The catalysed reaction is Exonucleolytic cleavage in the 3'- to 5'-direction to yield nucleoside 5'-phosphates.. Possesses two activities: a DNA synthesis (polymerase) and an exonucleolytic activity that degrades single-stranded DNA in the 3'- to 5'-direction. Has a template-primer preference which is characteristic of a replicative DNA polymerase. This Methanococcus maripaludis (strain DSM 14266 / JCM 13030 / NBRC 101832 / S2 / LL) protein is DNA polymerase II large subunit.